Reading from the N-terminus, the 277-residue chain is Large ribosomal subunit protein uL2 (277 aa).

Residues 219–277 (TVRGSVMNPNDHPHGGGEGKAPVGRKAPSTPWGKPALGLKTRNKKAKSDKLIVRRRNQK) form a disordered region.

The protein belongs to the universal ribosomal protein uL2 family. In terms of assembly, part of the 50S ribosomal subunit. Forms a bridge to the 30S subunit in the 70S ribosome.

In terms of biological role, one of the primary rRNA binding proteins. Required for association of the 30S and 50S subunits to form the 70S ribosome, for tRNA binding and peptide bond formation. It has been suggested to have peptidyltransferase activity; this is somewhat controversial. Makes several contacts with the 16S rRNA in the 70S ribosome. The polypeptide is Large ribosomal subunit protein uL2 (Streptococcus suis (strain 98HAH33)).